Here is a 458-residue protein sequence, read N- to C-terminus: Putative U-box domain-containing protein 46 (458 aa).

One can recognise a U-box domain in the interval 71–144; sequence EVPKEFICTL…TQWCLVNKYD (74 aa). ARM repeat units lie at residues 241–281 and 283–322; these read ESNK…SLSA and DSNK…NLCI.

The catalysed reaction is S-ubiquitinyl-[E2 ubiquitin-conjugating enzyme]-L-cysteine + [acceptor protein]-L-lysine = [E2 ubiquitin-conjugating enzyme]-L-cysteine + N(6)-ubiquitinyl-[acceptor protein]-L-lysine.. Its pathway is protein modification; protein ubiquitination. Its function is as follows. Functions as an E3 ubiquitin ligase. The chain is Putative U-box domain-containing protein 46 (PUB46) from Arabidopsis thaliana (Mouse-ear cress).